The sequence spans 212 residues: MKQLFRKWHTLSELKKELTNRNWFPATSGNISIKVSHEPLTFLISASGKDKTKTTPDDFLLVDHQGNPVLETELRPSAETILHTHIYNHTNAGCVLHVHTTDNNVITNLYEKEVMIRNQEIIKALNIWEEGATIHIPIIENYAHIPLLGEAFKKHIQSDCGAVLIRNHGITVWGKDSFDAKKRLEAYEFLFQFHIKLLSIQGGVSSGANSYS.

His97 and His99 together coordinate Zn(2+).

The protein belongs to the aldolase class II family. MtnB subfamily. In terms of assembly, homotetramer. It depends on Zn(2+) as a cofactor.

It catalyses the reaction 5-(methylsulfanyl)-D-ribulose 1-phosphate = 5-methylsulfanyl-2,3-dioxopentyl phosphate + H2O. Its pathway is amino-acid biosynthesis; L-methionine biosynthesis via salvage pathway; L-methionine from S-methyl-5-thio-alpha-D-ribose 1-phosphate: step 2/6. Catalyzes the dehydration of methylthioribulose-1-phosphate (MTRu-1-P) into 2,3-diketo-5-methylthiopentyl-1-phosphate (DK-MTP-1-P). The protein is Methylthioribulose-1-phosphate dehydratase of Bacillus cytotoxicus (strain DSM 22905 / CIP 110041 / 391-98 / NVH 391-98).